Here is a 1060-residue protein sequence, read N- to C-terminus: DNA topoisomerase 1 (1060 aa).

Positions 1–141 (MILVIAEKPN…KRMKFSALTK (141 aa)) constitute a Toprim domain. E7 and D107 together coordinate Mg(2+). The 792-residue stretch at 156-947 (NFGMANAGIA…EAKIRLTKIL (792 aa)) folds into the Topo IA-type catalytic domain. The interval 196 to 201 (STGRVQ) is interaction with DNA. In terms of domain architecture, DOD-type homing endonuclease spans 482–591 (LIGYLAGKGG…IKVYLQLLGI (110 aa)). The active-site O-(5'-phospho-DNA)-tyrosine intermediate is the Y690. The C4-type 1 zinc finger occupies 978–1006 (CPKCGGDLIVKYNEKTGKRFVGCSNWPKC). A C4-type 2; atypical zinc finger spans residues 1025-1050 (CCNGAPVVIIREKDGREWEICLDMNC).

The protein belongs to the type IA topoisomerase family. As to quaternary structure, monomer. The cofactor is Mg(2+). This protein undergoes a protein self splicing that involves a post-translational excision of the intervening region (intein) followed by peptide ligation.

It catalyses the reaction ATP-independent breakage of single-stranded DNA, followed by passage and rejoining.. Its function is as follows. Releases the supercoiling and torsional tension of DNA, which is introduced during the DNA replication and transcription, by transiently cleaving and rejoining one strand of the DNA duplex. Introduces a single-strand break via transesterification at a target site in duplex DNA. The scissile phosphodiester is attacked by the catalytic tyrosine of the enzyme, resulting in the formation of a DNA-(5'-phosphotyrosyl)-enzyme intermediate and the expulsion of a 3'-OH DNA strand. The free DNA strand then undergoes passage around the unbroken strand, thus removing DNA supercoils. Finally, in the religation step, the DNA 3'-OH attacks the covalent intermediate to expel the active-site tyrosine and restore the DNA phosphodiester backbone. This Pyrococcus furiosus (strain ATCC 43587 / DSM 3638 / JCM 8422 / Vc1) protein is DNA topoisomerase 1 (topA).